The following is an 83-amino-acid chain: Mitochondrial import inner membrane translocase subunit Tim8 B (83 aa).

The residue at position 2 (Ala2) is an N-acetylalanine. A Twin CX3C motif motif is present at residues 36–59 (CWDKCVEKPGNRLDSRTENCLSSC). 2 cysteine pairs are disulfide-bonded: Cys36/Cys59 and Cys40/Cys55.

This sequence belongs to the small Tim family. As to quaternary structure, heterohexamer; possibly composed of 3 copies of TIMM8B and 3 copies of TIMM13, named soluble 70 kDa complex. Associates with the TIM22 complex, whose core is composed of TIMM22.

It localises to the mitochondrion inner membrane. In terms of biological role, probable mitochondrial intermembrane chaperone that participates in the import and insertion of some multi-pass transmembrane proteins into the mitochondrial inner membrane. Also required for the transfer of beta-barrel precursors from the TOM complex to the sorting and assembly machinery (SAM complex) of the outer membrane. Acts as a chaperone-like protein that protects the hydrophobic precursors from aggregation and guide them through the mitochondrial intermembrane space. This is Mitochondrial import inner membrane translocase subunit Tim8 B (TIMM8B) from Bos taurus (Bovine).